We begin with the raw amino-acid sequence, 102 residues long: Putative pterin-4-alpha-carbinolamine dehydratase (102 aa).

It belongs to the pterin-4-alpha-carbinolamine dehydratase family.

It catalyses the reaction (4aS,6R)-4a-hydroxy-L-erythro-5,6,7,8-tetrahydrobiopterin = (6R)-L-erythro-6,7-dihydrobiopterin + H2O. The polypeptide is Putative pterin-4-alpha-carbinolamine dehydratase (Burkholderia ambifaria (strain ATCC BAA-244 / DSM 16087 / CCUG 44356 / LMG 19182 / AMMD) (Burkholderia cepacia (strain AMMD))).